Reading from the N-terminus, the 192-residue chain is Virion infectivity factor (192 aa).

The segment at 14–17 is interaction with host APOBEC3F; F1-box; sequence DRMR. The segment at 40–44 is interaction with host APOBEC3G; G-box; that stretch reads YRHHY. An interaction with host APOBEC3F and APOBEC3G; FG-box region spans residues 54–72; that stretch reads EVHIPLGEARLVVTTYWGL. Residues 74-79 form an interaction with host APOBEC3F; F2-box region; sequence TGEKEW. Residues 75–114 form an RNA-binding region; the sequence is GEKEWHLGQGVSIEWRKRRYSTQVDPGLADQLIHMYYFDC. Thr-96 is modified (phosphothreonine; by host MAP4K1). His-108, Cys-114, Cys-133, and His-139 together coordinate Zn(2+). Positions 108–139 match the HCCH motif motif; sequence HMYYFDCFAESAIRKAILGHIVSPSCEYQAGH. Ser-144 bears the Phosphoserine; by host mark. The short motif at 144-153 is the BC-box-like motif element; it reads SLQYLALAAL. A multimerization region spans residues 151 to 164; the sequence is AALIAPKKIKPPLP. Residues 151 to 180 are SOCS box-like; that stretch reads AALIAPKKIKPPLPSVRKLTEDRWNKPQKT. A Phosphoserine; by host MAP4K1 modification is found at Ser-165. The disordered stretch occupies residues 165-192; the sequence is SVRKLTEDRWNKPQKTKGRRGSHTMNGH. The interval 171–172 is membrane association; sequence ED. Residues 176 to 186 show a composition bias toward basic residues; it reads KPQKTKGRRGS. A Phosphothreonine; by host modification is found at Thr-188.

Belongs to the primate lentivirus group Vif protein family. Homomultimer; in vitro and presumably in vivo. Interacts with viral RNA and Pr55Gag precursor; these interactions mediate Vif incorporation into the virion. Interacts with the viral reverse transcriptase. Forms cullin-5-RING E3 ubiquitin-protein ligase complex (ECS complex) by interacting with host CUL5, RBX2, elongin BC complex (ELOB and ELOC) and CBFB/CBF-beta. Within the ECS complex, Vif interacts directly with host CUL5, ELOC and APOBEC (APOBEC3F and APOBEC3G) substrates. The ECS complex also contains some single-stranded RNA (ssRNA) that acts as a glue that bridges Vif with APOBEC (APOBEC3F and APOBEC3G) substrates. Interacts with host UBCE7IP1 isoform 3/ZIN and possibly with SAT. Interacts with host tyrosine kinases HCK and FYN; these interactions may decrease level of phosphorylated APOBEC3G incorporation into virions. Interacts with host ABCE1; this interaction may play a role in protecting viral RNA from damage during viral assembly. Interacts with host MDM2; this interaction targets Vif for degradation by the proteasome. Processed in virion by the viral protease. In terms of processing, highly phosphorylated on serine and threonine residues. Post-translationally, polyubiquitinated and degraded by the proteasome in the presence of APOBEC3G.

It localises to the host cytoplasm. The protein resides in the host cell membrane. The protein localises to the virion. Counteracts the innate antiviral activity of host APOBEC3F and APOBEC3G by promoting their ubiquitination and degradation. Acts as a substrate recognition component of an E3 ubiquitin-protein ligase complex: mechanistically, Vif hijacks a host cullin-5-RING E3 ubiquitin-protein ligase complex (ECS complex) and the transcription coactivator CBFB/CBF-beta to form an active E3 ubiquitin-protein ligase complex that targets APOBEC3G and APOBEC3F for polyubiquitination, leading to their degradation by the proteasome. Vif interaction with APOBEC3G also blocks its cytidine deaminase activity in a proteasome-independent manner, suggesting a dual inhibitory mechanism. May interact directly with APOBEC3G mRNA in order to inhibit its translation. Association with CBFB/CBF-beta also inhibits the transcription coactivator activity of CBFB/CBF-beta. Seems to play a role in viral morphology by affecting the stability of the viral nucleoprotein core. Finally, Vif also contributes to the G2 cell cycle arrest observed in HIV infected cells. In Human immunodeficiency virus type 1 group M subtype D (isolate NDK) (HIV-1), this protein is Virion infectivity factor.